The following is an 89-amino-acid chain: Acylphosphatase (89 aa).

Positions 4 to 89 (CVRCLIAGRV…IPEIQMFEVR (86 aa)) constitute an Acylphosphatase-like domain. Active-site residues include R19 and N37.

Belongs to the acylphosphatase family.

The catalysed reaction is an acyl phosphate + H2O = a carboxylate + phosphate + H(+). In Nitrosococcus oceani (strain ATCC 19707 / BCRC 17464 / JCM 30415 / NCIMB 11848 / C-107), this protein is Acylphosphatase (acyP).